A 1103-amino-acid chain; its full sequence is Trophozoite exported protein 1 (1103 aa).

A coiled-coil region spans residues 173–212; that stretch reads KKEKIEDKKYEQDDEEENEEEEEEEEEEEGEEENKEDEEF. Disordered regions lie at residues 178-210 and 271-301; these read EDKK…KEDE and KSYS…DNGK. A compositionally biased stretch (acidic residues) spans 184–210; the sequence is QDDEEENEEEEEEEEEEEGEEENKEDE. A compositionally biased stretch (basic and acidic residues) spans 271–280; sequence KSYSGDEKIN. Coiled coils occupy residues 304-330 and 478-518; these read DYVK…LECN and YKNY…KLNN. Residues 544 to 601 form a disordered region; the sequence is YFDEGENPYNRNNKNYRTDNKNSDDNNNNNNYYYNNYNSDDNYNSEDNEYNNGNYRFR. Residues 568-585 show a composition bias toward low complexity; it reads DNNNNNNYYYNNYNSDDN. Coiled coils occupy residues 650 to 791, 819 to 932, and 993 to 1030; these read FRNL…LSGI, DEKY…IYKK, and NKKL…NLSK. The RING-type zinc finger occupies 1050-1089; sequence CSVCMENFRNYIIIKCGHIYCNNCIFNNLKTRNRKCPQCK.

It is found in the host cell membrane. This chain is Trophozoite exported protein 1, found in Plasmodium falciparum (isolate 3D7).